The sequence spans 78 residues: Ferredoxin oxidoreductase 2 subunit ForD (78 aa).

4Fe-4S ferredoxin-type domains follow at residues 3-35 (FVAD…FKAS) and 37-66 (NSAW…HCIE). [4Fe-4S] cluster is bound by residues C12, C17, C20, C24, C46, C49, C52, and C56.

Heterotetramer of one alpha, one beta, one delta and one gamma chain. [4Fe-4S] cluster serves as cofactor.

The sequence is that of Ferredoxin oxidoreductase 2 subunit ForD (forD2) from Aquifex aeolicus (strain VF5).